We begin with the raw amino-acid sequence, 118 residues long: Small ribosomal subunit protein uS13 (118 aa).

Residues 91–118 (HRRGLPVRGQRTKTNARTRKGPRKPIKK) form a disordered region.

It belongs to the universal ribosomal protein uS13 family. As to quaternary structure, part of the 30S ribosomal subunit. Forms a loose heterodimer with protein S19. Forms two bridges to the 50S subunit in the 70S ribosome.

In terms of biological role, located at the top of the head of the 30S subunit, it contacts several helices of the 16S rRNA. In the 70S ribosome it contacts the 23S rRNA (bridge B1a) and protein L5 of the 50S subunit (bridge B1b), connecting the 2 subunits; these bridges are implicated in subunit movement. Contacts the tRNAs in the A and P-sites. This Serratia proteamaculans (strain 568) protein is Small ribosomal subunit protein uS13.